The sequence spans 482 residues: Immune evasion protein OPG047 (482 aa).

Positions 20 to 90 (KKFKTIIEAI…SYTGKVYIDS (71 aa)) constitute a BTB domain. A BACK domain is found at 125–222 (CIECYMMGIE…SNYLSPRGIH (98 aa)). Kelch repeat units lie at residues 273-319 (VVYL…PANN), 320-363 (KLYV…SINN), 365-408 (IYVM…VFGR), 410-447 (LFLVGRNAEFYCESSNTWTLIDDPIYPRDNPELIIVDN), and 448-482 (KLLLIGGFYRGSYIDTIEVYNNRTYSWNIWDGMEW).

It belongs to the orthopoxvirus OPG047 family.

Might have a role in the suppression of host immune response. The chain is Immune evasion protein OPG047 (OPG047) from Cynomys gunnisoni (Gunnison's prairie dog).